The sequence spans 160 residues: Sperm acrosome-associated protein 5 (160 aa).

The first 21 residues, 1–21, serve as a signal peptide directing secretion; it reads MKVCSIVVVILAVLLIAKLDA. One can recognise a C-type lysozyme domain in the interval 22-150; it reads KIYERCELAK…SEWLKGCSVR (129 aa). 4 disulfides stabilise this stretch: cysteine 27-cysteine 147, cysteine 51-cysteine 135, cysteine 85-cysteine 100, and cysteine 96-cysteine 114. Residue glutamate 56 is part of the active site.

It belongs to the glycosyl hydrolase 22 family.

The protein resides in the secreted. It carries out the reaction Hydrolysis of (1-&gt;4)-beta-linkages between N-acetylmuramic acid and N-acetyl-D-glucosamine residues in a peptidoglycan and between N-acetyl-D-glucosamine residues in chitodextrins.. This chain is Sperm acrosome-associated protein 5 (Spaca5), found in Mus musculus (Mouse).